Reading from the N-terminus, the 229-residue chain is Large ribosomal subunit protein uL1 (229 aa).

It belongs to the universal ribosomal protein uL1 family. In terms of assembly, part of the 50S ribosomal subunit.

Binds directly to 23S rRNA. The L1 stalk is quite mobile in the ribosome, and is involved in E site tRNA release. Its function is as follows. Protein L1 is also a translational repressor protein, it controls the translation of the L11 operon by binding to its mRNA. This Streptococcus pneumoniae serotype 2 (strain D39 / NCTC 7466) protein is Large ribosomal subunit protein uL1.